Reading from the N-terminus, the 797-residue chain is Speckle targeted PIP5K1A-regulated poly(A) polymerase (797 aa).

The Matrin-type zinc-finger motif lies at 14–44; it reads FHCNLCHVNIPNRPSLEDHVKGKKHLHLLRL. Positions 54–126 constitute an RRM domain; that stretch reads NSVFVSGFKA…LKLRVKPREK (73 aa). Residue Ser205 coordinates ATP. Asp216 and Asp218 together coordinate Mg(2+). UTP contacts are provided by Asp216, Asp218, Asn319, Arg341, Tyr363, and His495. Residue Asn319 coordinates ATP. The PAP-associated domain maps to 421-495; sequence DLCTLLFGFF…NVLDPFELNH (75 aa). Positions 544–787 are KA1; binds the bulging loops of U6 snRNA but is dispensable for terminal uridylyltransferase activity; that stretch reads QSEAAASSQP…FLPKMAETIM (244 aa). Positions 611–659 are disordered; sequence EETQSLDKTDKSGSEMEVNNNRSLEDTNIQVKGEAGKKRPLSVEEGPST. Over residues 615-624 the composition is skewed to basic and acidic residues; that stretch reads SLDKTDKSGS. The segment covering 627 to 640 has biased composition (polar residues); that stretch reads EVNNNRSLEDTNIQ.

Belongs to the DNA polymerase type-B-like family. As to quaternary structure, associates with the cleavage and polyadenylation specificity factor (CPSF) complex. It depends on Mg(2+) as a cofactor. Mn(2+) serves as cofactor.

Its subcellular location is the nucleus. The protein resides in the nucleolus. The protein localises to the nucleus speckle. It catalyses the reaction RNA(n) + UTP = RNA(n)-3'-uridine ribonucleotide + diphosphate. The catalysed reaction is RNA(n) + ATP = RNA(n)-3'-adenine ribonucleotide + diphosphate. Poly(A) polymerase that creates the 3'-poly(A) tail of specific pre-mRNAs. In addition to polyadenylation, it is also required for the 3'-end cleavage of pre-mRNAs: binds to the 3'UTR of targeted pre-mRNAs and promotes the recruitment and assembly of the CPSF complex on the 3'UTR of pre-mRNAs. In addition to adenylyltransferase activity, also has uridylyltransferase activity. However, the ATP ratio is higher than UTP in cells, suggesting that it functions primarily as a poly(A) polymerase. In Danio rerio (Zebrafish), this protein is Speckle targeted PIP5K1A-regulated poly(A) polymerase (tut1).